Here is a 393-residue protein sequence, read N- to C-terminus: Cysteine desulfurase (393 aa).

Residues 76-77 (GT), Asn-155, Gln-183, and 203-205 (SAH) contribute to the pyridoxal 5'-phosphate site. Lys-206 is subject to N6-(pyridoxal phosphate)lysine. Position 241 (Thr-241) interacts with pyridoxal 5'-phosphate. Cys-328 acts as the Cysteine persulfide intermediate in catalysis. Cys-328 lines the [2Fe-2S] cluster pocket.

Belongs to the class-V pyridoxal-phosphate-dependent aminotransferase family. NifS/IscS subfamily. Homodimer. Pyridoxal 5'-phosphate is required as a cofactor.

The enzyme catalyses (sulfur carrier)-H + L-cysteine = (sulfur carrier)-SH + L-alanine. Functionally, catalyzes the removal of elemental sulfur atoms from cysteine to produce alanine. Seems to participate in the biosynthesis of the nitrogenase metalloclusters by providing the inorganic sulfur required for the Fe-S core formation. The chain is Cysteine desulfurase from Bradyrhizobium diazoefficiens (strain JCM 10833 / BCRC 13528 / IAM 13628 / NBRC 14792 / USDA 110).